The sequence spans 175 residues: Large ribosomal subunit protein uL10 (175 aa).

Belongs to the universal ribosomal protein uL10 family. As to quaternary structure, part of the ribosomal stalk of the 50S ribosomal subunit. The N-terminus interacts with L11 and the large rRNA to form the base of the stalk. The C-terminus forms an elongated spine to which L12 dimers bind in a sequential fashion forming a multimeric L10(L12)X complex.

Its function is as follows. Forms part of the ribosomal stalk, playing a central role in the interaction of the ribosome with GTP-bound translation factors. The chain is Large ribosomal subunit protein uL10 from Cupriavidus taiwanensis (strain DSM 17343 / BCRC 17206 / CCUG 44338 / CIP 107171 / LMG 19424 / R1) (Ralstonia taiwanensis (strain LMG 19424)).